The chain runs to 105 residues: Pyrimidine/purine nucleoside phosphorylase (105 aa).

The protein belongs to the nucleoside phosphorylase PpnP family.

It catalyses the reaction a purine D-ribonucleoside + phosphate = a purine nucleobase + alpha-D-ribose 1-phosphate. It carries out the reaction adenosine + phosphate = alpha-D-ribose 1-phosphate + adenine. The enzyme catalyses cytidine + phosphate = cytosine + alpha-D-ribose 1-phosphate. The catalysed reaction is guanosine + phosphate = alpha-D-ribose 1-phosphate + guanine. It catalyses the reaction inosine + phosphate = alpha-D-ribose 1-phosphate + hypoxanthine. It carries out the reaction thymidine + phosphate = 2-deoxy-alpha-D-ribose 1-phosphate + thymine. The enzyme catalyses uridine + phosphate = alpha-D-ribose 1-phosphate + uracil. The catalysed reaction is xanthosine + phosphate = alpha-D-ribose 1-phosphate + xanthine. Functionally, catalyzes the phosphorolysis of diverse nucleosides, yielding D-ribose 1-phosphate and the respective free bases. Can use uridine, adenosine, guanosine, cytidine, thymidine, inosine and xanthosine as substrates. Also catalyzes the reverse reactions. This Cupriavidus pinatubonensis (strain JMP 134 / LMG 1197) (Cupriavidus necator (strain JMP 134)) protein is Pyrimidine/purine nucleoside phosphorylase.